The primary structure comprises 472 residues: ATP synthase subunit beta (472 aa).

Position 157–164 (157–164 (GGAGVGKT)) interacts with ATP.

This sequence belongs to the ATPase alpha/beta chains family. In terms of assembly, F-type ATPases have 2 components, CF(1) - the catalytic core - and CF(0) - the membrane proton channel. CF(1) has five subunits: alpha(3), beta(3), gamma(1), delta(1), epsilon(1). CF(0) has three main subunits: a(1), b(2) and c(9-12). The alpha and beta chains form an alternating ring which encloses part of the gamma chain. CF(1) is attached to CF(0) by a central stalk formed by the gamma and epsilon chains, while a peripheral stalk is formed by the delta and b chains.

It is found in the cell membrane. It carries out the reaction ATP + H2O + 4 H(+)(in) = ADP + phosphate + 5 H(+)(out). Produces ATP from ADP in the presence of a proton gradient across the membrane. The catalytic sites are hosted primarily by the beta subunits. The chain is ATP synthase subunit beta from Desulforamulus reducens (strain ATCC BAA-1160 / DSM 100696 / MI-1) (Desulfotomaculum reducens).